Consider the following 345-residue polypeptide: Nuclear egress protein 1 (345 aa).

Residues 115–247 form a CCCH-type zinc finger; the sequence is CISLSEMGYT…FVFKPGSPLH (133 aa).

This sequence belongs to the herpesviridae NEC1 protein family. Forms a heterohexameric complex with NEC2. Interacts with capsid vertex specific component 2/CVC2; this interaction directs the capsid to the host inner nuclear membrane to initiate budding. Phosphorylated at serine residues in the N-terminus. This phosphorylation regulates the localization within the inner nuclear membrane.

The protein resides in the host nucleus inner membrane. Its function is as follows. Plays an essential role in virion nuclear egress, the first step of virion release from infected cell. Within the host nucleus, NEC1 interacts with the newly formed capsid through the vertexes and directs it to the inner nuclear membrane by associating with NEC2. Induces the budding of the capsid at the inner nuclear membrane as well as its envelopment into the perinuclear space. There, the NEC1/NEC2 complex promotes the fusion of the enveloped capsid with the outer nuclear membrane and the subsequent release of the viral capsid into the cytoplasm where it will reach the secondary budding sites in the host Golgi or trans-Golgi network. This is Nuclear egress protein 1 from Psittacid herpesvirus 1 (isolate Amazon parrot/-/97-0001/1997) (PsHV-1).